The primary structure comprises 927 residues: DNA mismatch repair protein MutS (927 aa).

Position 646 to 653 (646 to 653 (GPNMAGKS)) interacts with ATP. Residues 904-927 (SAQPGSAEQGESPDKHDEGKNSRG) form a disordered region. The segment covering 915–927 (SPDKHDEGKNSRG) has biased composition (basic and acidic residues).

This sequence belongs to the DNA mismatch repair MutS family.

Its function is as follows. This protein is involved in the repair of mismatches in DNA. It is possible that it carries out the mismatch recognition step. This protein has a weak ATPase activity. The chain is DNA mismatch repair protein MutS from Desulfovibrio desulfuricans (strain ATCC 27774 / DSM 6949 / MB).